Consider the following 155-residue polypeptide: Large ribosomal subunit protein uL13 (155 aa).

Belongs to the universal ribosomal protein uL13 family. As to quaternary structure, part of the 50S ribosomal subunit.

Its function is as follows. This protein is one of the early assembly proteins of the 50S ribosomal subunit, although it is not seen to bind rRNA by itself. It is important during the early stages of 50S assembly. The sequence is that of Large ribosomal subunit protein uL13 from Rickettsia felis (strain ATCC VR-1525 / URRWXCal2) (Rickettsia azadi).